The sequence spans 281 residues: Transcription factor LBX1 (281 aa).

Residues 1-20 (MTSKEDGKAAPGEERRRSPL) show a composition bias toward basic and acidic residues. The interval 1 to 35 (MTSKEDGKAAPGEERRRSPLDHLPPPANSNKPLTP) is disordered. The homeobox DNA-binding region spans 125–184 (RRKSRTAFTNHQIYELEKRFLYQKYLSPADRDQIAQQLGLTNAQVITWFQNRRAKLKRDL). The disordered stretch occupies residues 214–281 (NSEATAGGGG…EEDEEIDVDD (68 aa)). Residues 253 to 267 (SPASPLTDQPASSQD) are compositionally biased toward polar residues. Residues 268–281 (CSEDEEDEEIDVDD) are compositionally biased toward acidic residues.

As to quaternary structure, interacts with SKOR1 which acts as a transcriptional corepressor.

The protein resides in the nucleus. Functionally, transcription factor required for the development of GABAergic interneurons in the dorsal horn of the spinal cord and migration and further development of hypaxial muscle precursor cells for limb muscles, diaphragm and hypoglossal cord. In Homo sapiens (Human), this protein is Transcription factor LBX1 (LBX1).